Here is a 319-residue protein sequence, read N- to C-terminus: Taste receptor type 2 member 30 (319 aa).

Position 1 (methionine 1) is a topological domain, extracellular. The helical transmembrane segment at 2–22 threads the bilayer; it reads ITFLPIIFSILIVVIFVIGNF. Topologically, residues 23–46 are cytoplasmic; the sequence is ANGFIALVNSIEWVKRQKISFADQ. Residues 47–67 traverse the membrane as a helical segment; sequence ILIALAVSRVGLLWALLLHWY. At 68–86 the chain is on the extracellular side; sequence ATELNLAFYSVEVRITAYN. Residues 87 to 107 form a helical membrane-spanning segment; the sequence is VWAVTNHFSNWLATSLSMFYL. The Cytoplasmic segment spans residues 108 to 126; the sequence is LKIANFSNLIFLRIKRRVK. The helical transmembrane segment at 127–147 threads the bilayer; that stretch reads SVILVILLGPLLFLVCHLFVI. Topologically, residues 148–178 are extracellular; that stretch reads NMNEIVWTKEYEGNLTWKIKLRNAVFLSNMT. Asparagine 161 and asparagine 176 each carry an N-linked (GlcNAc...) asparagine glycan. A helical membrane pass occupies residues 179–199; the sequence is LTMLANFVPLTLTLISFLLLI. Residues 200–229 are Cytoplasmic-facing; it reads CSLCKHLKKMQLHGKGSQDPSTKVHIKALQ. Residues 230–250 form a helical membrane-spanning segment; sequence TVTCFLLLCAIYFLSMIISVY. Residues 251–259 are Extracellular-facing; it reads NFGRLEKKP. A helical membrane pass occupies residues 260-280; it reads VFMFCQAITFSYPSTHAFILI. Topologically, residues 281-319 are cytoplasmic; it reads WGNKKLKQIFLSVLWHVRYWVKDRSLRLHRFTRAALCKG.

Belongs to the G-protein coupled receptor T2R family.

It is found in the membrane. Functionally, receptor that may play a role in the perception of bitterness and is gustducin-linked. May play a role in sensing the chemical composition of the gastrointestinal content. The activity of this receptor may stimulate alpha gustducin, mediate PLC-beta-2 activation and lead to the gating of TRPM5. The sequence is that of Taste receptor type 2 member 30 (TAS2R30) from Pongo pygmaeus (Bornean orangutan).